The sequence spans 163 residues: Putative 4-hydroxy-4-methyl-2-oxoglutarate aldolase (163 aa).

Substrate is bound by residues 76-79 and arginine 98; that span reads GDML. Aspartate 99 lines the a divalent metal cation pocket.

Belongs to the class II aldolase/RraA-like family. Homotrimer. A divalent metal cation serves as cofactor.

It carries out the reaction 4-hydroxy-4-methyl-2-oxoglutarate = 2 pyruvate. The enzyme catalyses oxaloacetate + H(+) = pyruvate + CO2. In terms of biological role, catalyzes the aldol cleavage of 4-hydroxy-4-methyl-2-oxoglutarate (HMG) into 2 molecules of pyruvate. Also contains a secondary oxaloacetate (OAA) decarboxylase activity due to the common pyruvate enolate transition state formed following C-C bond cleavage in the retro-aldol and decarboxylation reactions. The polypeptide is Putative 4-hydroxy-4-methyl-2-oxoglutarate aldolase (Pseudomonas putida (strain W619)).